Consider the following 53-residue polypeptide: UPF0391 membrane protein msr4317 (53 aa).

Transmembrane regions (helical) follow at residues 4–24 (WIIILLIVAAAASLLGMPALA) and 33–53 (ILIGIVLVIFLLVVLGIFAVT).

Belongs to the UPF0391 family.

The protein localises to the cell membrane. This Mesorhizobium japonicum (strain LMG 29417 / CECT 9101 / MAFF 303099) (Mesorhizobium loti (strain MAFF 303099)) protein is UPF0391 membrane protein msr4317.